A 215-amino-acid polypeptide reads, in one-letter code: MGKVYDWFEERLEVQAIADDISSKYVPPHVNIFYCFGGIVFTCFLVQVATGFAMTFYYRPSVVDAFASVEYIMTSVNFGWLIRSIHRWSASMMVMMLVLHVFRVYLTGGFKKPRELTWVTGVILAVVTVSFGVTGYSLPWDQVGFWACKIVTGVPAAVPIVGPPLVLVLRGGESVGQSTLTRFYSAHTFVLPLAAAVLMLTHFLMIRKQGISGPL.

The chain crosses the membrane as a helical span at residues 32-52; the sequence is IFYCFGGIVFTCFLVQVATGF. Cys35 contacts heme c. Positions 86 and 100 each coordinate heme b. The next 3 helical transmembrane spans lie at 90 to 110, 116 to 136, and 186 to 206; these read ASMM…TGGF, LTWV…VTGY, and AHTF…FLMI. Heme b-binding residues include His187 and His202.

Belongs to the cytochrome b family. PetB subfamily. In terms of assembly, the 4 large subunits of the cytochrome b6-f complex are cytochrome b6, subunit IV (17 kDa polypeptide, PetD), cytochrome f and the Rieske protein, while the 4 small subunits are PetG, PetL, PetM and PetN. The complex functions as a dimer. The cofactor is heme b. It depends on heme c as a cofactor.

It is found in the plastid. The protein localises to the chloroplast thylakoid membrane. In terms of biological role, component of the cytochrome b6-f complex, which mediates electron transfer between photosystem II (PSII) and photosystem I (PSI), cyclic electron flow around PSI, and state transitions. This is Cytochrome b6 from Skeletonema costatum (Marine centric diatom).